We begin with the raw amino-acid sequence, 231 residues long: Ribosomal RNA small subunit methyltransferase G (231 aa).

S-adenosyl-L-methionine contacts are provided by residues glycine 75, 125–126, and arginine 140; that span reads GE. Residues 204 to 213 show a composition bias toward acidic residues; that stretch reads AEAEEGDSPE. The tract at residues 204 to 231 is disordered; sequence AEAEEGDSPEAADASRGVILELTKKNKG.

Belongs to the methyltransferase superfamily. RNA methyltransferase RsmG family.

It localises to the cytoplasm. Specifically methylates the N7 position of a guanine in 16S rRNA. The sequence is that of Ribosomal RNA small subunit methyltransferase G from Rhodopirellula baltica (strain DSM 10527 / NCIMB 13988 / SH1).